We begin with the raw amino-acid sequence, 556 residues long: Glutamine--tRNA ligase (556 aa).

A 'HIGH' region motif is present at residues 35–45 (PEPNGYLHIGH). ATP contacts are provided by residues 36–38 (EPN) and 42–48 (HIGHAKS). L-glutamine is bound by residues Asp-68 and Tyr-213. Residues Thr-232 and 262-263 (RL) each bind ATP. The 'KMSKS' region signature appears at 269-273 (VTSKR).

The protein belongs to the class-I aminoacyl-tRNA synthetase family. In terms of assembly, monomer.

It is found in the cytoplasm. The catalysed reaction is tRNA(Gln) + L-glutamine + ATP = L-glutaminyl-tRNA(Gln) + AMP + diphosphate. In Pseudomonas aeruginosa (strain LESB58), this protein is Glutamine--tRNA ligase.